A 63-amino-acid polypeptide reads, in one-letter code: Putative flagellar calcium-binding protein (63 aa).

Polar residues predominate over residues 1–11 (MGCISSKSTQT). Residues 1–23 (MGCISSKSTQTGKKEGKTAAERK) form a disordered region. Over residues 12-23 (GKKEGKTAAERK) the composition is skewed to basic and acidic residues. The region spanning 40–63 (EDKARRIELFKKFDKNNTGKLSME) is the EF-hand domain. The Ca(2+) site is built by Asp-53, Asn-55, Thr-57, and Lys-59.

This sequence belongs to the calflagin family.

It localises to the cell projection. It is found in the cilium. The protein resides in the flagellum. The chain is Putative flagellar calcium-binding protein (CABP) from Crithidia fasciculata.